The following is a 484-amino-acid chain: Threonine synthase-like 2 (484 aa).

Residue Lys113 is modified to N6-(pyridoxal phosphate)lysine.

Belongs to the threonine synthase family. Pyridoxal 5'-phosphate is required as a cofactor.

It is found in the secreted. Its function is as follows. Acts as a catabolic phospho-lyase on both gamma- and beta-phosphorylated substrates. Degrades O-phospho-threonine (PThr) to alpha-ketobutyrate, ammonia and phosphate. In terms of biological role, potent inducer of osteoblastic production of IL6. May act to exacerbate inflammation and/or bone turnover under inflammatory conditions. The protein is Threonine synthase-like 2 (THNSL2) of Homo sapiens (Human).